The chain runs to 643 residues: Transcription elongation factor B polypeptide 3 (643 aa).

The 74-residue stretch at 9–82 folds into the TFIIS N-terminal domain; that stretch reads DVVRHYQRSI…TKWKAMVAKE (74 aa). Disordered stretches follow at residues 86–289 and 302–351; these read IAST…MGAN and SSKK…SKKP. Positions 94–106 are enriched in basic and acidic residues; that stretch reads HNEEDSGKTKSSD. The segment covering 114–124 has biased composition (polar residues); the sequence is KGGNSSSGEDL. Serine 120 is subject to Phosphoserine. Residues 127 to 136 show a composition bias toward basic residues; it reads SKHKSKHAKS. Composition is skewed to basic and acidic residues over residues 164 to 198 and 207 to 237; these read HDKS…KDSS and SKSE…VKDK. Over residues 238 to 255 the composition is skewed to basic residues; sequence SSKHKSSSSKSSKRSHSP. Residues 302-336 show a composition bias toward low complexity; sequence SSKKSSSNSKSKFVAKPTAAPSSSALSAPTTAGSS. An activation domain region spans residues 413 to 571; that stretch reads AQGISSKTMR…PPRSVQRKQE (159 aa). The segment at 439–448 is interacting with Elongin BC complex; it reads SLFDLCTRVL.

The protein resides in the nucleus. In terms of biological role, SIII, also known as elongin, is a general transcription elongation factor that increases the RNA polymerase II transcription elongation past template-encoded arresting sites. Subunit A is transcriptionally active and its transcription activity is strongly enhanced by binding to the dimeric complex of the SIII regulatory subunits B and C (elongin BC complex). May play an important role in metamorphosis. This chain is Transcription elongation factor B polypeptide 3 (EloA), found in Drosophila melanogaster (Fruit fly).